A 220-amino-acid polypeptide reads, in one-letter code: Protein LURP-one-related 12 (220 aa).

The protein belongs to the LOR family.

Might be related to the phospholipid scramblase and tubby-like superfamily of membrane tethered transcription factors. The polypeptide is Protein LURP-one-related 12 (Arabidopsis thaliana (Mouse-ear cress)).